Reading from the N-terminus, the 1144-residue chain is Guanine nucleotide-binding protein G(s) subunit alpha isoforms XLas (1144 aa).

4 disordered regions span residues 1-186 (MGML…LAPG), 316-558 (DDDT…PAAG), 622-657 (SASAAPSRAHLRPPSPEIQVADPPTPRPAPRPSAWP), and 735-772 (RSRSLSPGKAKDPMEERRKQMRKEAMEMREQKRADKKR). Over residues 31-46 (LEAQGAAAPGAGVGPA) the composition is skewed to low complexity. Basic and acidic residues predominate over residues 343–356 (KSEHAKRPPLERQA). The span at 358-369 (ETGNSPISSTTA) shows a compositional bias: polar residues. A compositionally biased stretch (basic and acidic residues) spans 370–381 (EEAKVPSLERGE). Low complexity-rich tracts occupy residues 467 to 499 (PAAAAAAEPAAEPAAEPAAEPAAEPAAEPAAEA) and 518 to 558 (EPAA…PAAG). Positions 644–654 (PPTPRPAPRPS) are enriched in pro residues. The segment covering 743–767 (KAKDPMEERRKQMRKEAMEMREQKR) has biased composition (basic and acidic residues). Positions 745–772 (KDPMEERRKQMRKEAMEMREQKRADKKR) form a coiled coil. In terms of domain architecture, G-alpha spans 789–1144 (CTHRLLLLGA…RMHLRQYELL (356 aa)). The tract at residues 792–805 (RLLLLGAGESGKST) is G1 motif. 797–805 (GAGESGKST) is a binding site for GTP. Serine 804 provides a ligand contact to Mg(2+). The interval 818–840 (FNGEGGEEDPQAARSNSDGEKAT) is disordered. Residues 837-863 (EKATKVQDIKNNLKEAIETIVAAMSNL) are a coiled coil. Residues 946-954 (DLPRCRVLT) form a G2 motif region. Residues 947–954 (LPRCRVLT), 973–977 (DVGGQ), and 1042–1045 (NKQD) each bind GTP. ADP-ribosylarginine; by cholera toxin is present on arginine 951. Residue threonine 954 participates in Mg(2+) binding. A G3 motif region spans residues 969 to 978 (FHMFDVGGQR). A G4 motif region spans residues 1038 to 1045 (ILFLNKQD). A Phosphoserine modification is found at serine 1102. Positions 1114–1119 (TCAVDT) are G5 motif. A GTP-binding site is contributed by alanine 1116.

This sequence belongs to the G-alpha family. G(s) subfamily. As to quaternary structure, g proteins are composed of 3 units; alpha, beta and gamma. The alpha chain contains the guanine nucleotide binding site. Interacts through its N-terminal region with ALEX which is produced from the same locus in a different open reading frame. This interaction may inhibit its adenylyl cyclase-stimulating activity. Interacts with MAGED2. In terms of tissue distribution, enriched in neuroendocrine tissues with a particularly high level of expression in pituitary where it is abundant in intermediate and anterior lobes. In adrenal gland, found in central region containing medullary chromaffin cells but not in cortex. In cerebellum, strongly expressed in perikarya of Purkinje cells. Not detected in liver, kidney or neurohypophysis.

It localises to the cell membrane. Its subcellular location is the apical cell membrane. Its function is as follows. Guanine nucleotide-binding proteins (G proteins) function as transducers in numerous signaling pathways controlled by G protein-coupled receptors (GPCRs). Signaling involves the activation of adenylyl cyclases, resulting in increased levels of the signaling molecule cAMP. GNAS functions downstream of several GPCRs, including beta-adrenergic receptors. XLas isoforms interact with the same set of receptors as Gnas isoforms. This is Guanine nucleotide-binding protein G(s) subunit alpha isoforms XLas from Rattus norvegicus (Rat).